A 219-amino-acid chain; its full sequence is Pyridoxine/pyridoxamine 5'-phosphate oxidase (219 aa).

Residues 15–18 (RRDY) and K73 contribute to the substrate site. FMN contacts are provided by residues 68–73 (RMVLLK), 83–84 (YT), R89, K90, and Q112. Substrate is bound by residues Y130, R134, and S138. Residues 147-148 (QS) and W192 contribute to the FMN site. A substrate-binding site is contributed by 198–200 (RLH). R202 serves as a coordination point for FMN.

The protein belongs to the pyridoxamine 5'-phosphate oxidase family. In terms of assembly, homodimer. Requires FMN as cofactor.

It catalyses the reaction pyridoxamine 5'-phosphate + O2 + H2O = pyridoxal 5'-phosphate + H2O2 + NH4(+). The enzyme catalyses pyridoxine 5'-phosphate + O2 = pyridoxal 5'-phosphate + H2O2. It participates in cofactor metabolism; pyridoxal 5'-phosphate salvage; pyridoxal 5'-phosphate from pyridoxamine 5'-phosphate: step 1/1. The protein operates within cofactor metabolism; pyridoxal 5'-phosphate salvage; pyridoxal 5'-phosphate from pyridoxine 5'-phosphate: step 1/1. In terms of biological role, catalyzes the oxidation of either pyridoxine 5'-phosphate (PNP) or pyridoxamine 5'-phosphate (PMP) into pyridoxal 5'-phosphate (PLP). The sequence is that of Pyridoxine/pyridoxamine 5'-phosphate oxidase from Acaryochloris marina (strain MBIC 11017).